The chain runs to 125 residues: Aspartate 1-decarboxylase (125 aa).

Serine 25 functions as the Schiff-base intermediate with substrate; via pyruvic acid in the catalytic mechanism. The residue at position 25 (serine 25) is a Pyruvic acid (Ser). Threonine 57 lines the substrate pocket. The Proton donor role is filled by tyrosine 58. 71-73 (GAA) contacts substrate.

It belongs to the PanD family. As to quaternary structure, heterooctamer of four alpha and four beta subunits. Pyruvate is required as a cofactor. Post-translationally, is synthesized initially as an inactive proenzyme, which is activated by self-cleavage at a specific serine bond to produce a beta-subunit with a hydroxyl group at its C-terminus and an alpha-subunit with a pyruvoyl group at its N-terminus.

The protein localises to the cytoplasm. The enzyme catalyses L-aspartate + H(+) = beta-alanine + CO2. It participates in cofactor biosynthesis; (R)-pantothenate biosynthesis; beta-alanine from L-aspartate: step 1/1. Its function is as follows. Catalyzes the pyruvoyl-dependent decarboxylation of aspartate to produce beta-alanine. The chain is Aspartate 1-decarboxylase from Hydrogenobaculum sp. (strain Y04AAS1).